Here is a 684-residue protein sequence, read N- to C-terminus: DNA ligase (684 aa).

NAD(+)-binding positions include 46-50 (DYVYD), 100-101 (SL), and Glu130. The active-site N6-AMP-lysine intermediate is the Lys132. Residues Arg153, Glu187, Lys303, and Lys327 each coordinate NAD(+). Zn(2+)-binding residues include Cys421, Cys424, Cys439, and Cys444. Residues 604–684 (DEKNYFFNKR…DFINLSNAKK (81 aa)) form the BRCT domain.

The protein belongs to the NAD-dependent DNA ligase family. LigA subfamily. It depends on Mg(2+) as a cofactor. Requires Mn(2+) as cofactor.

The catalysed reaction is NAD(+) + (deoxyribonucleotide)n-3'-hydroxyl + 5'-phospho-(deoxyribonucleotide)m = (deoxyribonucleotide)n+m + AMP + beta-nicotinamide D-nucleotide.. In terms of biological role, DNA ligase that catalyzes the formation of phosphodiester linkages between 5'-phosphoryl and 3'-hydroxyl groups in double-stranded DNA using NAD as a coenzyme and as the energy source for the reaction. It is essential for DNA replication and repair of damaged DNA. The chain is DNA ligase from Oenococcus oeni (strain ATCC BAA-331 / PSU-1).